Here is a 271-residue protein sequence, read N- to C-terminus: Mitochondrial distribution and morphology protein 12 (271 aa).

The region spanning 1–267 is the SMP-LTD domain; that stretch reads MSFDINWSTL…WPSWINLDFN (267 aa). K49 participates in a covalent cross-link: Glycyl lysine isopeptide (Lys-Gly) (interchain with G-Cter in ubiquitin).

The protein belongs to the MDM12 family. Component of the ER-mitochondria encounter structure (ERMES) or MDM complex, composed of MMM1, MDM10, MDM12 and MDM34. An MMM1 homodimer associates with one molecule of MDM12 on each side in a pairwise head-to-tail manner, and the SMP-LTD domains of MMM1 and MDM12 generate a continuous hydrophobic tunnel for phospholipid trafficking. Interacts with PUF3.

The protein localises to the mitochondrion outer membrane. The protein resides in the endoplasmic reticulum membrane. Component of the ERMES/MDM complex, which serves as a molecular tether to connect the endoplasmic reticulum (ER) and mitochondria. Components of this complex are involved in the control of mitochondrial shape and protein biogenesis, and function in nonvesicular lipid trafficking between the ER and mitochondria. MDM12 is required for the interaction of the ER-resident membrane protein MMM1 and the outer mitochondrial membrane-resident beta-barrel protein MDM10. The MDM12-MMM1 subcomplex functions in the major beta-barrel assembly pathway that is responsible for biogenesis of all mitochondrial outer membrane beta-barrel proteins, and acts in a late step after the SAM complex. The MDM10-MDM12-MMM1 subcomplex further acts in the TOM40-specific pathway after the action of the MDM12-MMM1 complex. Essential for establishing and maintaining the structure of mitochondria and maintenance of mtDNA nucleoids. The sequence is that of Mitochondrial distribution and morphology protein 12 from Saccharomyces cerevisiae (strain AWRI1631) (Baker's yeast).